Consider the following 160-residue polypeptide: 6,7-dimethyl-8-ribityllumazine synthase (160 aa).

Residues Trp27, 59–61 (AIE), and 81–83 (VVI) each bind 5-amino-6-(D-ribitylamino)uracil. Residue 86-87 (ET) participates in (2S)-2-hydroxy-3-oxobutyl phosphate binding. The active-site Proton donor is His89. Asn114 provides a ligand contact to 5-amino-6-(D-ribitylamino)uracil. Arg128 serves as a coordination point for (2S)-2-hydroxy-3-oxobutyl phosphate.

This sequence belongs to the DMRL synthase family. As to quaternary structure, homopentamer.

The enzyme catalyses (2S)-2-hydroxy-3-oxobutyl phosphate + 5-amino-6-(D-ribitylamino)uracil = 6,7-dimethyl-8-(1-D-ribityl)lumazine + phosphate + 2 H2O + H(+). The protein operates within cofactor biosynthesis; riboflavin biosynthesis; riboflavin from 2-hydroxy-3-oxobutyl phosphate and 5-amino-6-(D-ribitylamino)uracil: step 1/2. In terms of biological role, catalyzes the formation of 6,7-dimethyl-8-ribityllumazine by condensation of 5-amino-6-(D-ribitylamino)uracil with 3,4-dihydroxy-2-butanone 4-phosphate. This is the penultimate step in the biosynthesis of riboflavin. In Mycobacterium ulcerans (strain Agy99), this protein is 6,7-dimethyl-8-ribityllumazine synthase.